The following is a 323-amino-acid chain: Putative divalent cation/proton antiporter TMEM165 (323 aa).

An N-terminal signal peptide occupies residues 1 to 33 (MAAAARGSGRAPTRRLLVLLLLQLLWAPAGVRA). Residues 34–89 (GPEEDLSHRNQEPPAPAQQLQPQPAAVQGLEPARAEKGLTPVAPVHTNKEDAAAQT) are Lumenal-facing. Positions 35-44 (PEEDLSHRNQ) are enriched in basic and acidic residues. The segment at 35 to 60 (PEEDLSHRNQEPPAPAQQLQPQPAAV) is disordered. Residues 50–59 (AQQLQPQPAA) are compositionally biased toward low complexity. The helical transmembrane segment at 90 to 110 (NLGFIHAFVAAISVIIVSELG) threads the bilayer. Over 111-126 (DKTFFIAAIMAMRYNR) the chain is Cytoplasmic. Residues 127-147 (LTVLAGAMLALALMTCLSVLF) form a helical membrane-spanning segment. The Lumenal portion of the chain corresponds to 148-151 (GYAT). A helical membrane pass occupies residues 152–172 (TVIPRVYTYYVSTALFAIFGI). At 173–227 (RMLREGLKMSPDEGQEELEEVQAELKKKDEEFQRTKLLNGPDVETGTSTAIPQKK) the chain is on the cytoplasmic side. The stretch at 184–211 (DEGQEELEEVQAELKKKDEEFQRTKLLN) forms a coiled coil. Residues 228–248 (WLHFISPIFVQALTLTFLAEW) traverse the membrane as a helical segment. The Lumenal segment spans residues 249–266 (GDRSQLTTIVLAAREDPY). The helical transmembrane segment at 267–287 (GVAVGGTVGHCLCTGLAVIGG) threads the bilayer. Over 288-298 (RMIAQKISVRT) the chain is Cytoplasmic. Residues 299-319 (VTIIGGIVFLAFAFSALFISP) traverse the membrane as a helical segment. Topologically, residues 320 to 323 (ESGF) are lumenal.

The protein belongs to the GDT1 family. Expressed in mammary epithelial cells (at protein level).

The protein resides in the golgi apparatus membrane. It carries out the reaction Ca(2+)(in) + n H(+)(out) = Ca(2+)(out) + n H(+)(in). It catalyses the reaction Mn(2+)(in) + n H(+)(out) = Mn(2+)(out) + n H(+)(in). In terms of biological role, putative divalent cation:proton antiporter that exchanges calcium or manganese ions for protons across the Golgi membrane. Mediates the reversible transport of calcium or manganese to the Golgi lumen driven by the proton gradient and possibly the membrane potential generated by V-ATPase. Provides calcium or manganese cofactors to resident Golgi enzymes and contributes to the maintenance of an acidic luminal Golgi pH required for proper functioning of the secretory pathway. Promotes Ca(2+) storage within the Golgi lumen of the mammary epithelial cells to be then secreted into milk. The transport mechanism and stoichiometry remains to be elucidated. This chain is Putative divalent cation/proton antiporter TMEM165, found in Mus musculus (Mouse).